The primary structure comprises 108 residues: Cell division topological specificity factor (108 aa).

Belongs to the MinE family.

Its function is as follows. Prevents the cell division inhibition by proteins MinC and MinD at internal division sites while permitting inhibition at polar sites. This ensures cell division at the proper site by restricting the formation of a division septum at the midpoint of the long axis of the cell. The sequence is that of Cell division topological specificity factor from Prochlorococcus marinus (strain AS9601).